Here is a 467-residue protein sequence, read N- to C-terminus: Protein arginine methyltransferase NDUFAF7 homolog, mitochondrial (467 aa).

Belongs to the NDUFAF7 family.

Its subcellular location is the mitochondrion. It carries out the reaction L-arginyl-[protein] + 2 S-adenosyl-L-methionine = N(omega),N(omega)'-dimethyl-L-arginyl-[protein] + 2 S-adenosyl-L-homocysteine + 2 H(+). Arginine methyltransferase involved in the assembly or stability of mitochondrial NADH:ubiquinone oxidoreductase complex (complex I). The protein is Protein arginine methyltransferase NDUFAF7 homolog, mitochondrial of Schizosaccharomyces pombe (strain 972 / ATCC 24843) (Fission yeast).